Here is a 1584-residue protein sequence, read N- to C-terminus: Cilia- and flagella-associated protein 74 (1584 aa).

The stretch at 300 to 379 (RKFQAWDRAK…EAEEEKRKKQ (80 aa)) forms a coiled coil. Residues 692-706 (SEQQLEGTESSQADM) are compositionally biased toward polar residues. The disordered stretch occupies residues 692 to 739 (SEQQLEGTESSQADMQSRKELEKLDKEQEEEQPAEPERLTTVIPPSEE). Basic and acidic residues predominate over residues 707 to 717 (QSRKELEKLDK).

Belongs to the CFAP74 family.

It localises to the cytoplasm. The protein localises to the cytoskeleton. It is found in the cilium axoneme. The protein resides in the flagellum axoneme. As part of the central apparatus of the cilium axoneme may play a role in cilium movement. May play an important role in sperm architecture and function. This chain is Cilia- and flagella-associated protein 74, found in Homo sapiens (Human).